Consider the following 1574-residue polypeptide: DNA-directed RNA polymerase subunit beta' (1574 aa).

Residues Cys-64, Cys-66, Cys-79, and Cys-82 each contribute to the Zn(2+) site. Residues Asp-590, Asp-592, and Asp-594 each contribute to the Mg(2+) site. Zn(2+) contacts are provided by Cys-928, Cys-1002, Cys-1009, and Cys-1012.

This sequence belongs to the RNA polymerase beta' chain family. The RNAP catalytic core consists of 2 alpha, 1 beta, 1 beta' and 1 omega subunit. When a sigma factor is associated with the core the holoenzyme is formed, which can initiate transcription. It depends on Mg(2+) as a cofactor. Zn(2+) is required as a cofactor.

The enzyme catalyses RNA(n) + a ribonucleoside 5'-triphosphate = RNA(n+1) + diphosphate. Its function is as follows. DNA-dependent RNA polymerase catalyzes the transcription of DNA into RNA using the four ribonucleoside triphosphates as substrates. In Aquifex aeolicus (strain VF5), this protein is DNA-directed RNA polymerase subunit beta'.